A 393-amino-acid chain; its full sequence is Protein TsgA (393 aa).

A run of 12 helical transmembrane segments spans residues 11 to 31 (WISFLSYALTGALVIVTGMVM), 51 to 71 (FLNAGILISIFLNAWLMEIVP), 78 to 98 (FGFLLMVLAVAGLMFSHSLAL), 101 to 121 (AAMFILGVVSGITMSIGTFLV), 134 to 154 (LLFTDSFFSMAGMIFPMIAAF), 162 to 182 (WYWVYACIGLVYVAIFILTFG), 206 to 226 (IGVLFLSVAALCYILGQLGFI), 245 to 265 (TLVSNFWMSYMVGMWAFSFIL), 273 to 293 (ILTVLAGLAAILMYVFNTGTP), 297 to 317 (AWSILALGFFSSAIYTTIITL), 332 to 352 (FVLTCGTIGTMLTFVVTGPIV), and 361 to 381 (LLTANGLYAVVFVMCFLLGFV).

This sequence belongs to the major facilitator superfamily. TsgA family.

The protein resides in the cell inner membrane. The protein is Protein TsgA of Escherichia coli O6:K15:H31 (strain 536 / UPEC).